A 400-amino-acid polypeptide reads, in one-letter code: CCA-adding enzyme (400 aa).

2 residues coordinate ATP: Gly8 and Arg11. Residues Gly8 and Arg11 each contribute to the CTP site. Mg(2+)-binding residues include Asp21 and Asp23. Residues Arg91, Arg137, and Arg140 each contribute to the ATP site. CTP is bound by residues Arg91, Arg137, and Arg140. The HD domain maps to 217–322; sequence NFQYAMTALK…IDLFNKWDVW (106 aa).

It belongs to the tRNA nucleotidyltransferase/poly(A) polymerase family. Bacterial CCA-adding enzyme type 2 subfamily. Mg(2+) serves as cofactor.

It carries out the reaction a tRNA precursor + 2 CTP + ATP = a tRNA with a 3' CCA end + 3 diphosphate. It catalyses the reaction a tRNA with a 3' CCA end + 2 CTP + ATP = a tRNA with a 3' CCACCA end + 3 diphosphate. Catalyzes the addition and repair of the essential 3'-terminal CCA sequence in tRNAs without using a nucleic acid template. Adds these three nucleotides in the order of C, C, and A to the tRNA nucleotide-73, using CTP and ATP as substrates and producing inorganic pyrophosphate. tRNA 3'-terminal CCA addition is required both for tRNA processing and repair. Also involved in tRNA surveillance by mediating tandem CCA addition to generate a CCACCA at the 3' terminus of unstable tRNAs. While stable tRNAs receive only 3'-terminal CCA, unstable tRNAs are marked with CCACCA and rapidly degraded. The protein is CCA-adding enzyme of Actinobacillus succinogenes (strain ATCC 55618 / DSM 22257 / CCUG 43843 / 130Z).